Consider the following 712-residue polypeptide: Polyribonucleotide nucleotidyltransferase (712 aa).

The Mg(2+) site is built by Asp-488 and Asp-494. One can recognise a KH domain in the interval 555 to 614; sequence PKIETINIPTDKIREVIGSGGKVIREIVATTGAKVDINDDGVVKVSASDGAKIKAAIDWI. In terms of domain architecture, S1 motif spans 624–692; sequence GKIYDGKVVK…DRGKTKLSMK (69 aa).

This sequence belongs to the polyribonucleotide nucleotidyltransferase family. It depends on Mg(2+) as a cofactor.

Its subcellular location is the cytoplasm. It catalyses the reaction RNA(n+1) + phosphate = RNA(n) + a ribonucleoside 5'-diphosphate. In terms of biological role, involved in mRNA degradation. Catalyzes the phosphorolysis of single-stranded polyribonucleotides processively in the 3'- to 5'-direction. This is Polyribonucleotide nucleotidyltransferase from Caulobacter vibrioides (strain NA1000 / CB15N) (Caulobacter crescentus).